The primary structure comprises 1213 residues: A disintegrin and metalloproteinase with thrombospondin motifs 2 (1213 aa).

A signal peptide spans 1–28; it reads MDPPAGAARRLLCPALLLLLLPPPPLLL. Residues 29–260 constitute a propeptide that is removed on maturation; it reads LPPPPASVRL…INSSRRRVRR (232 aa). N-linked (GlcNAc...) asparagine glycosylation occurs at asparagine 111. The interval 211–232 is disordered; sequence YRRPPTPKPPPVSEPQALDTGV. The span at 214–223 shows a compositional bias: pro residues; sequence PPTPKPPPVS. Asparagine 252 carries an N-linked (GlcNAc...) asparagine glycan. The Peptidase M12B domain occupies 267 to 471; sequence YNIEVLLGVD…HSYDCLRDDP (205 aa). Intrachain disulfides connect cysteine 344–cysteine 393, cysteine 387–cysteine 466, cysteine 426–cysteine 452, cysteine 493–cysteine 518, cysteine 504–cysteine 527, cysteine 513–cysteine 546, cysteine 540–cysteine 551, cysteine 574–cysteine 611, cysteine 578–cysteine 616, and cysteine 589–cysteine 601. Histidine 409 contacts Zn(2+). The active site involves glutamate 410. The Zn(2+) site is built by histidine 413 and histidine 419. In terms of domain architecture, Disintegrin spans 480-560; sequence PQLPGLHYSM…CIWLTPDILK (81 aa). The TSP type-1 1 domain maps to 561 to 617; the sequence is RDGNWGAWTPFGSCSRTCGTGVKFRTRQCDNPHPANGGRTCSGLAYDFQLCNPQDCP. The Cell attachment site motif lies at 692–694; that stretch reads RGD. Positions 723–851 are spacer; sequence CKVVKGTFTR…LNVDDNNVLE (129 aa). 3 consecutive TSP type-1 domains span residues 855–913, 915–975, and 976–1030; these read VRHE…NPQE, SQPV…NREL, and CPGR…APCP. 3 N-linked (GlcNAc...) asparagine glycosylation sites follow: asparagine 949, asparagine 950, and asparagine 994. Cystine bridges form between cysteine 988–cysteine 1024, cysteine 992–cysteine 1029, and cysteine 1003–cysteine 1013. A glycan (N-linked (GlcNAc...) asparagine) is linked at asparagine 1032. Residues 1060–1098 form the PLAC domain; it reads SKDQCQGDKSMFCRMEVLSRYCSIPSYNKLCCKSCNPPR. Residues asparagine 1099, asparagine 1147, and asparagine 1152 are each glycosylated (N-linked (GlcNAc...) asparagine).

In terms of assembly, may belong to a multimeric complex. Binds specifically to collagen type XIV. The cofactor is Zn(2+). Post-translationally, the precursor is cleaved by a furin endopeptidase. Glycosylated. Can be O-fucosylated by POFUT2 on a serine or a threonine residue found within the consensus sequence C1-X(2)-(S/T)-C2-G of the TSP type-1 repeat domains where C1 and C2 are the first and second cysteine residue of the repeat, respectively. Fucosylated repeats can then be further glycosylated by the addition of a beta-1,3-glucose residue by the glucosyltransferase, B3GALTL. Fucosylation mediates the efficient secretion of ADAMTS family members. Can also be C-glycosylated with one or two mannose molecules on tryptophan residues within the consensus sequence W-X-X-W of the TPRs, and N-glycosylated. These other glycosylations can also facilitate secretion.

Its subcellular location is the secreted. The protein resides in the extracellular space. It localises to the extracellular matrix. It carries out the reaction Cleaves the N-propeptide of collagen chain alpha1(I) at Pro-|-Gln and of alpha1(II) and alpha2(I) at Ala-|-Gln.. Functionally, cleaves the propeptides of type I and II collagen prior to fibril assembly. Does not act on type III collagen. Cleaves lysyl oxidase LOX at a site downstream of its propeptide cleavage site to produce a short LOX form with reduced collagen-binding activity. The chain is A disintegrin and metalloproteinase with thrombospondin motifs 2 (Adamts2) from Mus musculus (Mouse).